A 590-amino-acid polypeptide reads, in one-letter code: Proline--tRNA ligase (590 aa).

Belongs to the class-II aminoacyl-tRNA synthetase family. ProS type 1 subfamily. As to quaternary structure, homodimer.

The protein resides in the cytoplasm. It catalyses the reaction tRNA(Pro) + L-proline + ATP = L-prolyl-tRNA(Pro) + AMP + diphosphate. In terms of biological role, catalyzes the attachment of proline to tRNA(Pro) in a two-step reaction: proline is first activated by ATP to form Pro-AMP and then transferred to the acceptor end of tRNA(Pro). As ProRS can inadvertently accommodate and process non-cognate amino acids such as alanine and cysteine, to avoid such errors it has two additional distinct editing activities against alanine. One activity is designated as 'pretransfer' editing and involves the tRNA(Pro)-independent hydrolysis of activated Ala-AMP. The other activity is designated 'posttransfer' editing and involves deacylation of mischarged Ala-tRNA(Pro). The misacylated Cys-tRNA(Pro) is not edited by ProRS. This chain is Proline--tRNA ligase, found in Clavibacter sepedonicus (Clavibacter michiganensis subsp. sepedonicus).